The sequence spans 295 residues: Protease HtpX (295 aa).

2 consecutive transmembrane segments (helical) span residues 4–24 (ILLF…TLSL) and 42–62 (QLLV…LFIS). His-147 contributes to the Zn(2+) binding site. The active site involves Glu-148. His-151 lines the Zn(2+) pocket. 2 helical membrane passes run 158-178 (VTLA…ARII) and 199-219 (ITTI…VMWF). Glu-224 serves as a coordination point for Zn(2+).

This sequence belongs to the peptidase M48B family. Zn(2+) is required as a cofactor.

Its subcellular location is the cell inner membrane. In Pseudomonas savastanoi pv. phaseolicola (strain 1448A / Race 6) (Pseudomonas syringae pv. phaseolicola (strain 1448A / Race 6)), this protein is Protease HtpX.